Reading from the N-terminus, the 320-residue chain is o-succinylbenzoate synthase (320 aa).

The Proton donor role is filled by lysine 133. The Mg(2+) site is built by aspartate 161, glutamate 190, and aspartate 213. The active-site Proton acceptor is the lysine 235.

It belongs to the mandelate racemase/muconate lactonizing enzyme family. MenC type 1 subfamily. A divalent metal cation is required as a cofactor.

It carries out the reaction (1R,6R)-6-hydroxy-2-succinyl-cyclohexa-2,4-diene-1-carboxylate = 2-succinylbenzoate + H2O. It functions in the pathway quinol/quinone metabolism; 1,4-dihydroxy-2-naphthoate biosynthesis; 1,4-dihydroxy-2-naphthoate from chorismate: step 4/7. The protein operates within quinol/quinone metabolism; menaquinone biosynthesis. Its function is as follows. Converts 2-succinyl-6-hydroxy-2,4-cyclohexadiene-1-carboxylate (SHCHC) to 2-succinylbenzoate (OSB). The polypeptide is o-succinylbenzoate synthase (Shigella boydii serotype 18 (strain CDC 3083-94 / BS512)).